The primary structure comprises 749 residues: Chitin synthase G (749 aa).

Transmembrane regions (helical) follow at residues 40–60 (CVGELVGIFLPVMIAILPLPP), 73–93 (VLQWFAFWAFSALLIIPWLFC), 421–441 (FMQNTIRTTALLFFILAISII), 451–471 (PVGFIAVSLGLNYILMVYFGI), and 483–503 (LMFILNPFFNWLYIVYGIFTA). The interval 683–749 (IESGSGIPSG…RRYMQPEQMV (67 aa)) is disordered. Residues 697–718 (LSSSVPQSGMQQSRAVPGNMSQ) are compositionally biased toward polar residues. N-linked (GlcNAc...) asparagine glycosylation is present at Asn-715. Residues 728-742 (YTKRPSRIPRQKRRY) are compositionally biased toward basic residues.

This sequence belongs to the chitin synthase family. Class VI subfamily.

It localises to the cell membrane. The enzyme catalyses [(1-&gt;4)-N-acetyl-beta-D-glucosaminyl](n) + UDP-N-acetyl-alpha-D-glucosamine = [(1-&gt;4)-N-acetyl-beta-D-glucosaminyl](n+1) + UDP + H(+). Polymerizes chitin, a structural polymer of the cell wall and septum, by transferring the sugar moiety of UDP-GlcNAc to the non-reducing end of the growing chitin polymer. Plays an important role in septal growth or maintenance. Mediates colony spore formation. The polypeptide is Chitin synthase G (Aspergillus niger (strain ATCC MYA-4892 / CBS 513.88 / FGSC A1513)).